A 281-amino-acid chain; its full sequence is Large ribosomal subunit protein uL2 (281 aa).

Positions 223-255 (TVRGSVMNPNDHPHGGGEGRAPIGRKSPVTPWG) are disordered.

The protein belongs to the universal ribosomal protein uL2 family. As to quaternary structure, part of the 50S ribosomal subunit. Forms a bridge to the 30S subunit in the 70S ribosome.

Its function is as follows. One of the primary rRNA binding proteins. Required for association of the 30S and 50S subunits to form the 70S ribosome, for tRNA binding and peptide bond formation. It has been suggested to have peptidyltransferase activity; this is somewhat controversial. Makes several contacts with the 16S rRNA in the 70S ribosome. The polypeptide is Large ribosomal subunit protein uL2 (Mycoplasma capricolum subsp. capricolum (strain California kid / ATCC 27343 / NCTC 10154)).